Here is a 228-residue protein sequence, read N- to C-terminus: ATP synthase F(0) complex subunit a (228 aa).

Helical transmembrane passes span 13–33, 70–90, 100–120, 140–160, 162–182, and 190–210; these read YFLG…TMFI, WALL…TGLL, LSLN…MGAT, APFL…ALGV, LTAN…ALIN, and LFLT…VSFI.

This sequence belongs to the ATPase A chain family. In terms of assembly, component of the ATP synthase complex composed at least of ATP5F1A/subunit alpha, ATP5F1B/subunit beta, ATP5MC1/subunit c (homooctomer), MT-ATP6/subunit a, MT-ATP8/subunit 8, ATP5ME/subunit e, ATP5MF/subunit f, ATP5MG/subunit g, ATP5MK/subunit k, ATP5MJ/subunit j, ATP5F1C/subunit gamma, ATP5F1D/subunit delta, ATP5F1E/subunit epsilon, ATP5PF/subunit F6, ATP5PB/subunit b, ATP5PD/subunit d, ATP5PO/subunit OSCP. ATP synthase complex consists of a soluble F(1) head domain (subunits alpha(3) and beta(3)) - the catalytic core - and a membrane F(0) domain - the membrane proton channel (subunits c, a, 8, e, f, g, k and j). These two domains are linked by a central stalk (subunits gamma, delta, and epsilon) rotating inside the F1 region and a stationary peripheral stalk (subunits F6, b, d, and OSCP). Interacts with DNAJC30; interaction is direct.

The protein localises to the mitochondrion inner membrane. It catalyses the reaction H(+)(in) = H(+)(out). Functionally, subunit a, of the mitochondrial membrane ATP synthase complex (F(1)F(0) ATP synthase or Complex V) that produces ATP from ADP in the presence of a proton gradient across the membrane which is generated by electron transport complexes of the respiratory chain. ATP synthase complex consist of a soluble F(1) head domain - the catalytic core - and a membrane F(1) domain - the membrane proton channel. These two domains are linked by a central stalk rotating inside the F(1) region and a stationary peripheral stalk. During catalysis, ATP synthesis in the catalytic domain of F(1) is coupled via a rotary mechanism of the central stalk subunits to proton translocation. With the subunit c (ATP5MC1), forms the proton-conducting channel in the F(0) domain, that contains two crucial half-channels (inlet and outlet) that facilitate proton movement from the mitochondrial intermembrane space (IMS) into the matrix. Protons are taken up via the inlet half-channel and released through the outlet half-channel, following a Grotthuss mechanism. The polypeptide is ATP synthase F(0) complex subunit a (Myxine glutinosa (Atlantic hagfish)).